Consider the following 357-residue polypeptide: Aurora kinase A- and ninein-interacting protein (357 aa).

Residues 72–93 show a composition bias toward polar residues; that stretch reads TSQQGKTNGADQRSVSSHTESQ. The segment at 72–102 is disordered; sequence TSQQGKTNGADQRSVSSHTESQTNKESKEDA. Positions 189–357 are interaction with AURKA; the sequence is QKEGEDSSCE…EGNQVIRHQA (169 aa). An interaction with RBBP8/CtIP region spans residues 281-357; it reads KDSWSQLFTE…EGNQVIRHQA (77 aa). S292 is modified (phosphoserine).

This sequence belongs to the AUNIP family. As to quaternary structure, interacts (via C-terminus) with AURKA (via C-terminus). Interacts (via N-terminus) with NIN; this interaction blocks NIN phosphorylation by both AURKA and GSK3B. Identified in a complex with NIN and AURKA. Interacts with RBBP8/CtIP.

It localises to the nucleus. The protein localises to the chromosome. The protein resides in the cytoplasm. It is found in the cytoskeleton. Its subcellular location is the microtubule organizing center. It localises to the centrosome. The protein localises to the spindle pole. Functionally, DNA-binding protein that accumulates at DNA double-strand breaks (DSBs) following DNA damage and promotes DNA resection and homologous recombination. Serves as a sensor of DNA damage: binds DNA with a strong preference for DNA substrates that mimic structures generated at stalled replication forks, and anchors RBBP8/CtIP to DSB sites to promote DNA end resection and ensuing homologous recombination repair. Inhibits non-homologous end joining (NHEJ). Required for the dynamic movement of AURKA at the centrosomes and spindle apparatus during the cell cycle. This chain is Aurora kinase A- and ninein-interacting protein, found in Bos taurus (Bovine).